The sequence spans 1392 residues: MEDFFSFFDKPKDPLHFSAIRISVSSPEKIRERSFGEVKKPETINYRTFKPERDGLFCAKIFGPTKDYECNCGKYKRMKHRGIVCEKCGVEVIPSKVRRERLGHIDLATPVAHIWFLKSLPSRIGNLLDISLKDLEKVLYFEAYAVTDPKNTGMAMAEVLSEDRYLKALEEHNYQFEAGMGAAAIRDCLKAIDLDQLAEQLRQEMIEATSEAKRKKTAKRLKVVEAFKESGNRPEWMILECIPVLPPELRPLVPLDGGRFATSDLNDLYRRVINRNNRLKRLMELQAPEVIIRNEKRMLQEAVDALFDNGRRGRAIAGPNKRPLKSLSDMLKGKSGRFRQNLLGKRVDYSGRSVIVVGPELRLHQCGLPKKMALELFKPFIYNKLEERGFVTTIKSAKKMVEKERPEVWDVLEEVIKEHPVMLNRAPTLHRLGIQAFEPVLIEGKAIQLHPLVCTAFNADFDGDQMAVHLPLSIESQVEARVLMMSTNNILSPAHGKPIIVPSQDMVLGIYYMTRERHFAKGDGKIFASPEEVRIAYDAGEVDLQARISVRMKNILSAASEQPAIIETTVGRILLREILPEMVPFSSINKVMSKKELVNLIDVCYRLAGNKETVILADRLKETGFRYSTLAGISICMNDMVIPEGKSAIIDSANDEVKEIQNQYTEGLITDGERYNKVIDIWAKATEDIAKQMLDNLSKDTILSPDGQEVKIPSFNAIHMMADSGARGSAQQIRQLAGMRGLMAKPSGEIIETPITANFREGLNVLQYFISTHGARKGLADTALKTANSGYLTRRLVDVAQDAIITETDCGTLDGLTVTSLTEGGEVIEQIGDRILGRVALDDILDPVTGDVLVPANQEIDETLVKRIEDAGIERVKIRSVLTCQSRRGICAKCYGRDLARGHIVNMGEAVGVIAAQSIGEPGTQLTMRTFHIGGTASRHAEQTSLEARTEGRVKFININSVVNIEGHHIVMNRNGEVAIIDETGREREKYGIVYGAKIKFGPDQVVKPGETLAEWDPYTMPILTEVAGRVKFGDIVEGVTMEEQLDEVTGLSRKVIIESRDADKRPRIAIKASDPESASGGSTIGRYYLPVGANISVAEDSFVNAGDVIAKIPRETTKTKDITGGLPRVAELFEARKPKDFAVITEIDGVVTFGKDAKGKRKVIVTPELGEPKEYLIPKGKHISVHENDYVRAGEPLMDGSSNPHDILRVLGIKELAKYLVDEVQEVYRLQGVKINDKHIETIVRQMLRRVRIKEVGDTNLLIDDQLERWVFEEENERVIAKGGRPAIAEPLLLGITKASLSTESFISAASFQETTKVLTQAAIEGKVDQLRGLKENVIMGRLIPAGTGLSRYRNLKLVAEQAELLEPVAVAPPAVEEDYPEDDMLDDIEE.

Zn(2+)-binding residues include Cys-70, Cys-72, Cys-85, and Cys-88. Residues Asp-460, Asp-462, and Asp-464 each contribute to the Mg(2+) site. Zn(2+) contacts are provided by Cys-810, Cys-884, Cys-891, and Cys-894.

The protein belongs to the RNA polymerase beta' chain family. In terms of assembly, the RNAP catalytic core consists of 2 alpha, 1 beta, 1 beta' and 1 omega subunit. When a sigma factor is associated with the core the holoenzyme is formed, which can initiate transcription. Mg(2+) serves as cofactor. Zn(2+) is required as a cofactor.

The enzyme catalyses RNA(n) + a ribonucleoside 5'-triphosphate = RNA(n+1) + diphosphate. Functionally, DNA-dependent RNA polymerase catalyzes the transcription of DNA into RNA using the four ribonucleoside triphosphates as substrates. The sequence is that of DNA-directed RNA polymerase subunit beta' from Geobacter metallireducens (strain ATCC 53774 / DSM 7210 / GS-15).